Here is a 67-residue protein sequence, read N- to C-terminus: MMSKLGVLLTICLLLFPLTAVQLDGDQPADLPALRTQDIATDHSPWFDPVKRCCSRYCYICIPCCPN.

A signal peptide spans 1–20; the sequence is MMSKLGVLLTICLLLFPLTA. Residues 21–50 constitute a propeptide that is removed on maturation; it reads VQLDGDQPADLPALRTQDIATDHSPWFDPV. Intrachain disulfides connect Cys-53–Cys-65, Cys-54–Cys-61, and Cys-58–Cys-64. Pro-63 is subject to 4-hydroxyproline.

It belongs to the conotoxin M superfamily. In terms of tissue distribution, expressed by the venom duct.

Its subcellular location is the secreted. The chain is Conotoxin TsMMSK-011 from Conus tessulatus (Tessellate cone).